A 117-amino-acid polypeptide reads, in one-letter code: Immunoglobulin kappa variable 1D-17 (117 aa).

A signal peptide spans 1–22; the sequence is MDMRVPAQLLGLLLLWFPGARC. Residues 23 to 45 form a framework-1 region; it reads NIQMTQSPSAMSASVGDRVTITC. Residues 23-117 enclose the Ig-like domain; the sequence is NIQMTQSPSA…YYCLQHNSYP (95 aa). Residues C45 and C110 are joined by a disulfide bond. Residues 46–56 form a complementarity-determining-1 region; that stretch reads RARQGISNYLA. The tract at residues 57–71 is framework-2; sequence WFQQKPGKVPKHLIY. The complementarity-determining-2 stretch occupies residues 72–78; the sequence is AASSLQS. Residues 79-110 are framework-3; that stretch reads GVPSRFSGSGSGTEFTLTISSLQPEDFATYYC. The tract at residues 111-117 is complementarity-determining-3; it reads LQHNSYP.

In terms of assembly, immunoglobulins are composed of two identical heavy chains and two identical light chains; disulfide-linked.

Its subcellular location is the secreted. The protein localises to the cell membrane. V region of the variable domain of immunoglobulin light chains that participates in the antigen recognition. Immunoglobulins, also known as antibodies, are membrane-bound or secreted glycoproteins produced by B lymphocytes. In the recognition phase of humoral immunity, the membrane-bound immunoglobulins serve as receptors which, upon binding of a specific antigen, trigger the clonal expansion and differentiation of B lymphocytes into immunoglobulins-secreting plasma cells. Secreted immunoglobulins mediate the effector phase of humoral immunity, which results in the elimination of bound antigens. The antigen binding site is formed by the variable domain of one heavy chain, together with that of its associated light chain. Thus, each immunoglobulin has two antigen binding sites with remarkable affinity for a particular antigen. The variable domains are assembled by a process called V-(D)-J rearrangement and can then be subjected to somatic hypermutations which, after exposure to antigen and selection, allow affinity maturation for a particular antigen. The sequence is that of Immunoglobulin kappa variable 1D-17 from Homo sapiens (Human).